The sequence spans 447 residues: NADH-quinone oxidoreductase subunit F (447 aa).

61–70 serves as a coordination point for NAD(+); sequence GRGGAGFSTG. Position 174–221 (174–221) interacts with FMN; it reads GAGRYICGEETALINSLEGRRANPRAKPPFPAVFGLWGKPTCVNNVET. 4 residues coordinate [4Fe-4S] cluster: Cys-352, Cys-355, Cys-358, and Cys-399.

It belongs to the complex I 51 kDa subunit family. As to quaternary structure, composed of 13 different subunits. Subunits NuoCD, E, F, and G constitute the peripheral sector of the complex. The cofactor is [4Fe-4S] cluster. FMN serves as cofactor.

It carries out the reaction a quinone + NADH + 5 H(+)(in) = a quinol + NAD(+) + 4 H(+)(out). Its function is as follows. NDH-1 shuttles electrons from NADH, via FMN and iron-sulfur (Fe-S) centers, to quinones in the respiratory chain. Couples the redox reaction to proton translocation (for every two electrons transferred, four hydrogen ions are translocated across the cytoplasmic membrane), and thus conserves the redox energy in a proton gradient. The sequence is that of NADH-quinone oxidoreductase subunit F (nuoF) from Buchnera aphidicola subsp. Schizaphis graminum (strain Sg).